The sequence spans 467 residues: Nuclear distribution protein nudF 1 (467 aa).

In terms of domain architecture, LisH spans glutamine 9–valine 41. The stretch at threonine 60 to threonine 87 forms a coiled coil. WD repeat units follow at residues serine 113–lysine 154, histidine 156–arginine 196, glycine 200–threonine 247, glycine 250–threonine 289, glycine 292–leucine 352, glycine 354–arginine 393, threonine 398–proline 428, and alanine 429–alanine 466. Positions glycine 417–alanine 437 are enriched in low complexity. The interval glycine 417–proline 441 is disordered.

This sequence belongs to the WD repeat LIS1/nudF family. Self-associates. Interacts with nudE and dynein.

The protein localises to the cytoplasm. It localises to the cytoskeleton. Its subcellular location is the spindle pole. Its function is as follows. Positively regulates the activity of the minus-end directed microtubule motor protein dynein. May enhance dynein-mediated microtubule sliding by targeting dynein to the microtubule plus end. Required for nuclear migration during vegetative growth as well as development. Required for retrograde early endosome (EE) transport from the hyphal tip. Required for localization of dynein to the mitotic spindle poles. Recruits additional proteins to the dynein complex at SPBs. The polypeptide is Nuclear distribution protein nudF 1 (Aspergillus clavatus (strain ATCC 1007 / CBS 513.65 / DSM 816 / NCTC 3887 / NRRL 1 / QM 1276 / 107)).